A 407-amino-acid polypeptide reads, in one-letter code: Peptidase T (407 aa).

Histidine 82 is a Zn(2+) binding site. The active site involves aspartate 84. Aspartate 143 is a Zn(2+) binding site. The Proton acceptor role is filled by glutamate 177. Glutamate 178, aspartate 200, and histidine 382 together coordinate Zn(2+).

The protein belongs to the peptidase M20B family. Requires Zn(2+) as cofactor.

It localises to the cytoplasm. The catalysed reaction is Release of the N-terminal residue from a tripeptide.. Its function is as follows. Cleaves the N-terminal amino acid of tripeptides. The polypeptide is Peptidase T (Streptococcus equi subsp. equi (strain 4047)).